An 81-amino-acid polypeptide reads, in one-letter code: ATP synthase subunit c (81 aa).

2 consecutive transmembrane segments (helical) span residues 7–27 and 55–75; these read LVAIASAILIAFGALGTAIGF and IAGLLDAVPMIGVGIGLFFIF.

The protein belongs to the ATPase C chain family. F-type ATPases have 2 components, F(1) - the catalytic core - and F(0) - the membrane proton channel. F(1) has five subunits: alpha(3), beta(3), gamma(1), delta(1), epsilon(1). F(0) has three main subunits: a(1), b(2) and c(10-14). The alpha and beta chains form an alternating ring which encloses part of the gamma chain. F(1) is attached to F(0) by a central stalk formed by the gamma and epsilon chains, while a peripheral stalk is formed by the delta and b chains.

It is found in the cell inner membrane. In terms of biological role, f(1)F(0) ATP synthase produces ATP from ADP in the presence of a proton or sodium gradient. F-type ATPases consist of two structural domains, F(1) containing the extramembraneous catalytic core and F(0) containing the membrane proton channel, linked together by a central stalk and a peripheral stalk. During catalysis, ATP synthesis in the catalytic domain of F(1) is coupled via a rotary mechanism of the central stalk subunits to proton translocation. Key component of the F(0) channel; it plays a direct role in translocation across the membrane. A homomeric c-ring of between 10-14 subunits forms the central stalk rotor element with the F(1) delta and epsilon subunits. The protein is ATP synthase subunit c of Acinetobacter baumannii (strain ACICU).